A 284-amino-acid polypeptide reads, in one-letter code: TM2 domain-containing protein almondex (284 aa).

The first 32 residues, 1–32 (MRLQRQCIVVNMRSAIVLIMIFVLTGIRNSET), serve as a signal peptide directing secretion. The interval 33–63 (ASGGNQMDLSDSKGDHKDNSNASNGNGNAND) is disordered. Residues 33–225 (ASGGNQMDLS…NWTQGYRWST (193 aa)) lie on the Extracellular side of the membrane. Residues 42–51 (SDSKGDHKDN) show a composition bias toward basic and acidic residues. The segment covering 52–63 (SNASNGNGNAND) has biased composition (low complexity). N-linked (GlcNAc...) asparagine glycosylation is found at Asn-53, Asn-89, Asn-141, Asn-194, Asn-206, and Asn-216. Residues 220 to 267 (GYRWSTALLISLTLGGFGADRFYLGHWQEGIGKLFSFGGLGVWTIIDV) enclose the TM2 domain. The helical transmembrane segment at 226–246 (ALLISLTLGGFGADRFYLGHW) threads the bilayer. Topologically, residues 247 to 249 (QEG) are cytoplasmic. The helical transmembrane segment at 250 to 270 (IGKLFSFGGLGVWTIIDVLLI) threads the bilayer. Residues 271–284 (SMHYLGPADGSLYI) lie on the Extracellular side of the membrane.

This sequence belongs to the TM2 family. In terms of tissue distribution, expressed in female ovary, mainly in nurse cells (at protein level). Expressed in the brain at low levels (at protein level).

Its subcellular location is the membrane. It localises to the vesicle. In terms of biological role, positive regulator of Notch signaling during lateral inhibition and boundary formation. Interacts with Notch signaling at the membrane, at the level of gamma-secretase-mediated S3 cleavage. May regulate Notch signaling by regulating the subcellular localization of N/Notch in a context dependent manner. Maternal neurogenic factor involved in Notch signaling-dependent mesectodermal and neuroectodermal specification during early embryogenesis. Functions cooperatively with bisc/TM2D1 and amrt/TM2D2. Required for maintenance of neuronal function. Involved in imaginal specification of eyes and wings. The polypeptide is TM2 domain-containing protein almondex (Drosophila melanogaster (Fruit fly)).